A 411-amino-acid polypeptide reads, in one-letter code: Serine--tRNA ligase (411 aa).

226–228 (TSE) is a binding site for L-serine. 257-259 (RKE) serves as a coordination point for ATP. Glu-280 lines the L-serine pocket. An ATP-binding site is contributed by 344-347 (EISS). Residue Ser-379 coordinates L-serine.

Belongs to the class-II aminoacyl-tRNA synthetase family. Type-1 seryl-tRNA synthetase subfamily. Homodimer. The tRNA molecule binds across the dimer.

Its subcellular location is the cytoplasm. The catalysed reaction is tRNA(Ser) + L-serine + ATP = L-seryl-tRNA(Ser) + AMP + diphosphate + H(+). It carries out the reaction tRNA(Sec) + L-serine + ATP = L-seryl-tRNA(Sec) + AMP + diphosphate + H(+). It functions in the pathway aminoacyl-tRNA biosynthesis; selenocysteinyl-tRNA(Sec) biosynthesis; L-seryl-tRNA(Sec) from L-serine and tRNA(Sec): step 1/1. In terms of biological role, catalyzes the attachment of serine to tRNA(Ser). Is also able to aminoacylate tRNA(Sec) with serine, to form the misacylated tRNA L-seryl-tRNA(Sec), which will be further converted into selenocysteinyl-tRNA(Sec). The chain is Serine--tRNA ligase from Campylobacter jejuni (strain RM1221).